Reading from the N-terminus, the 226-residue chain is UPF0758 protein SPT_1135 (226 aa).

Residues 103–225 enclose the MPN domain; the sequence is SILSSQKLAK…YFSYREKTDL (123 aa). Residues His174, His176, and Asp187 each coordinate Zn(2+). The JAMM motif motif lies at 174 to 187; that stretch reads HNHPSGAVAPSQND.

This sequence belongs to the UPF0758 family.

In Streptococcus pneumoniae (strain Taiwan19F-14), this protein is UPF0758 protein SPT_1135.